We begin with the raw amino-acid sequence, 310 residues long: Manganese ABC transporter substrate-binding lipoprotein scaA (310 aa).

The first 19 residues, methionine 1–alanine 19, serve as a signal peptide directing secretion. The N-palmitoyl cysteine moiety is linked to residue cysteine 20. Cysteine 20 carries the S-diacylglycerol cysteine lipid modification. Residues histidine 68, histidine 140, glutamate 206, and aspartate 281 each contribute to the Mn(2+) site.

It belongs to the bacterial solute-binding protein 9 family. Lipoprotein receptor antigen (Lrai) subfamily. The complex is composed of two ATP-binding proteins (ScaC), two transmembrane proteins (ScaB) and a solute-binding protein (ScaA).

Its subcellular location is the cell membrane. Part of ATP-binding cassette (ABC) transport system ScaABC involved in manganese import. Essential for growth under Mn(2+)-limiting conditions. Also acts as an adhesin which is involved on adherence to extracellular matrix. It is an important factor in pathogenesis and infection. The polypeptide is Manganese ABC transporter substrate-binding lipoprotein scaA (Streptococcus gordonii).